Here is a 477-residue protein sequence, read N- to C-terminus: Probable malate:quinone oxidoreductase (477 aa).

Belongs to the MQO family. It depends on FAD as a cofactor.

The catalysed reaction is (S)-malate + a quinone = a quinol + oxaloacetate. The protein operates within carbohydrate metabolism; tricarboxylic acid cycle; oxaloacetate from (S)-malate (quinone route): step 1/1. The chain is Probable malate:quinone oxidoreductase from Synechococcus sp. (strain RCC307).